The primary structure comprises 427 residues: Gamma-glutamyl phosphate reductase (427 aa).

Belongs to the gamma-glutamyl phosphate reductase family.

It localises to the cytoplasm. It catalyses the reaction L-glutamate 5-semialdehyde + phosphate + NADP(+) = L-glutamyl 5-phosphate + NADPH + H(+). The protein operates within amino-acid biosynthesis; L-proline biosynthesis; L-glutamate 5-semialdehyde from L-glutamate: step 2/2. In terms of biological role, catalyzes the NADPH-dependent reduction of L-glutamate 5-phosphate into L-glutamate 5-semialdehyde and phosphate. The product spontaneously undergoes cyclization to form 1-pyrroline-5-carboxylate. The chain is Gamma-glutamyl phosphate reductase from Rhizobium etli (strain CIAT 652).